A 383-amino-acid polypeptide reads, in one-letter code: Serine protease 23 (383 aa).

The signal sequence occupies residues 1-19 (MAGIPGLLFLLFFLLCAVG). The N-linked (GlcNAc...) asparagine glycan is linked to N93. S109 is modified (phosphoserine; by FAM20C). C160 and C176 form a disulfide bridge. H175 serves as the catalytic Charge relay system. N207 carries an N-linked (GlcNAc...) asparagine glycan. Residues D240 and S316 each act as charge relay system in the active site.

This sequence belongs to the peptidase S1 family.

It is found in the secreted. The chain is Serine protease 23 (PRSS23) from Homo sapiens (Human).